Consider the following 61-residue polypeptide: Bactridin-1 (61 aa).

The LCN-type CS-alpha/beta domain occupies 1–61 (KDGYIIEHRG…KIFDSNNLKC (61 aa)). 4 disulfide bridges follow: Cys11–Cys61, Cys15–Cys37, Cys23–Cys42, and Cys27–Cys44.

It belongs to the long (4 C-C) scorpion toxin superfamily. Sodium channel inhibitor family. Beta subfamily. Expressed by the venom gland.

The protein resides in the secreted. Shows antibacterial activity against both Gram-positive bacteria (B.subtilis, M.luteus, E.faecalis) and Gram-negative bacteria (P.aeruginosa, Y.enterocolitica, A.calcoaceticus). Modifies membrane sodium permeability on Y.enterocolitica. Is toxic to cockroaches and crabs, but is not toxic to mice. Does not induce haemolysis in human erythrocytes. Acts by inhibiting the sodium (Nav) currents. The polypeptide is Bactridin-1 (Tityus discrepans (Venezuelan scorpion)).